The sequence spans 135 residues: Ribosome-binding factor A (135 aa).

It belongs to the RbfA family. As to quaternary structure, monomer. Binds 30S ribosomal subunits, but not 50S ribosomal subunits or 70S ribosomes.

Its subcellular location is the cytoplasm. One of several proteins that assist in the late maturation steps of the functional core of the 30S ribosomal subunit. Associates with free 30S ribosomal subunits (but not with 30S subunits that are part of 70S ribosomes or polysomes). Required for efficient processing of 16S rRNA. May interact with the 5'-terminal helix region of 16S rRNA. The protein is Ribosome-binding factor A of Bartonella tribocorum (strain CIP 105476 / IBS 506).